We begin with the raw amino-acid sequence, 32 residues long: Cytochrome b6-f complex subunit 7 (32 aa).

A helical transmembrane segment spans residues 9 to 27 (AAVFWILIPIGLVGGALLL).

This sequence belongs to the PetM family. In terms of assembly, the 4 large subunits of the cytochrome b6-f complex are cytochrome b6, subunit IV (17 kDa polypeptide, PetD), cytochrome f and the Rieske protein, while the 4 small subunits are PetG, PetL, PetM and PetN. The complex functions as a dimer.

The protein resides in the cellular thylakoid membrane. Functionally, component of the cytochrome b6-f complex, which mediates electron transfer between photosystem II (PSII) and photosystem I (PSI), cyclic electron flow around PSI, and state transitions. The chain is Cytochrome b6-f complex subunit 7 from Prochlorococcus marinus (strain MIT 9301).